The chain runs to 171 residues: Large ribosomal subunit protein bL9 (171 aa).

It belongs to the bacterial ribosomal protein bL9 family.

Functionally, binds to the 23S rRNA. The chain is Large ribosomal subunit protein bL9 from Orientia tsutsugamushi (strain Ikeda) (Rickettsia tsutsugamushi).